Reading from the N-terminus, the 325-residue chain is MATIRELRDRIRSVNSTKKITKAQELIATSRITKAQGRVAAAAPYAEEIQRVLERLASASSLDHPMLREREGGKRAAVLVVTSDRGMAGGYNHNVLKKAAELEKLLAESGYEVVRYVTGKKGVDYYKFRAEDVAGTWTGFSQDPDWAATHNVRRHLIDGFTASSEGEAAWREGLNLPEGQDIQGFDQVHVVYTEFISMLTQNPVVHQLLPVEPVIEDEIFEKGEDLLSSSGEVEPDYEFEPDADTLLEALLPQYVSRRLFSIFLEAAAAESASRRNAMKSATDNATELVKDLSRVANQARQAQITQEITEIVGGAGALADSGESD.

This sequence belongs to the ATPase gamma chain family. In terms of assembly, F-type ATPases have 2 components, CF(1) - the catalytic core - and CF(0) - the membrane proton channel. CF(1) has five subunits: alpha(3), beta(3), gamma(1), delta(1), epsilon(1). CF(0) has three main subunits: a, b and c.

Its subcellular location is the cell membrane. Produces ATP from ADP in the presence of a proton gradient across the membrane. The gamma chain is believed to be important in regulating ATPase activity and the flow of protons through the CF(0) complex. In Corynebacterium glutamicum (strain ATCC 13032 / DSM 20300 / JCM 1318 / BCRC 11384 / CCUG 27702 / LMG 3730 / NBRC 12168 / NCIMB 10025 / NRRL B-2784 / 534), this protein is ATP synthase gamma chain.